The sequence spans 1199 residues: MLDVNNFEYMNIGLASPDKIRSWSYGEVKKPETINYRTLKPEKDGLFCERIFGPQKDWECHCGKYKRVRYKGVVCDRCGVEVTRAKVRRERMGHIELAAPVSHIWYFKGIPSRMGLVLDMSPRALEEVIYFASYVVTDPANTPLEKKQLLSEKEYRAYLDKYGNKFQASMGAEAIHKLLQDIDLDKEVDMLKEELKTSQGQRRTRAIKRLEVLEAFRNSGNKPSWMILDVLPVIPPELRPMVQLDGGRFATSDLNDLYRRVINRNNRLKRLLDLGAPSIIVQNEKRMLQEAVDALIDNGRRGRPVTGPGNRPLKSLSHMLKGKQGRFRQNLLGKRVDYSGRSVIVVGPNLKMYQCGLPKEMALELFKPFVMKELVEKGLAHNIKSAKRKIERVQPEVWDVLESVIKEHPVLLNRAPTLHRLGIQAFEPTLVEGRAIRLHPLVCTAYNADFDGDQMAVHVPLSAEAQAEARILMLAAQNILNPKDGKPVVTPSQDMVLGNYYLTLERPGAVGEGMIFKDTDEALLAYQNGYVHLHTRVAVAVNSLKNETFTEEQRSKLLITTVGKLIFNEILPPSFPYMNEPTKSNIEEKTPDRFFLDYGADVKEAIKNQEINPPFKKGILGKIIAEIFKRFHITETSKMLDRMKNLGFKYSTKAGITVGVSDIVVLDDKQEILEEAQGKVDNVMKQFRRGLITEEERYERVISIWSAAKDTIQGKLMKSLDEINPIYMMSDSGARGNASNFTQLAGMRGLMANPAGRIIELPIKSSFREGLTVLEYFISTHGARKGLADTALKTADSGYLTRRLVDVAQDVIIRETDCGTDRGILAKAITEGTEVIERLEERLVGRFARKPVKHPETGEVLVNENELIDEDKAIEIVEAGIEEVWIRSAFTCNTSHGVCKRCYGRNLATGTDVEVGEAVGIIAAQSIGEPGTQLTMRTFHTGGVAGDDITQGLPRIQELFEARNPKGQATISEIDGVVAEINEVRDKQQEIVVQGEVESRSYTAPYNARLKVTEGEKISRGQVLTEGSVDPKELLKVTDITTVQEYLLHEVQKVYRMQGVEIGDKHVEVMVRQMLRKVRVIDAGDTEVLPGTLLDIHQFTEANKKVLLEGKRPATGRPVLLGITKASLETDSFLSAASFQETTRVLTDAAIKGKRDELLGLKENVIIGKLVPAGTGMLNYRKVKPVLQVQSSDEMVPAE.

Residues Cys-60, Cys-62, Cys-75, and Cys-78 each coordinate Zn(2+). Positions 449, 451, and 453 each coordinate Mg(2+). The Zn(2+) site is built by Cys-818, Cys-892, Cys-899, and Cys-902.

It belongs to the RNA polymerase beta' chain family. In terms of assembly, the RNAP catalytic core consists of 2 alpha, 1 beta, 1 beta' and 1 omega subunit. When a sigma factor is associated with the core the holoenzyme is formed, which can initiate transcription. Mg(2+) serves as cofactor. Zn(2+) is required as a cofactor.

The enzyme catalyses RNA(n) + a ribonucleoside 5'-triphosphate = RNA(n+1) + diphosphate. Functionally, DNA-dependent RNA polymerase catalyzes the transcription of DNA into RNA using the four ribonucleoside triphosphates as substrates. The chain is DNA-directed RNA polymerase subunit beta' from Bacillus licheniformis (strain ATCC 14580 / DSM 13 / JCM 2505 / CCUG 7422 / NBRC 12200 / NCIMB 9375 / NCTC 10341 / NRRL NRS-1264 / Gibson 46).